The primary structure comprises 225 residues: Cbp/p300-interacting transactivator 2 (225 aa).

It belongs to the CITED family.

The protein resides in the nucleus. In terms of biological role, transcriptional coactivator or corepressor of the p300/CBP-mediated transcription complex. May be involved in sex determination, early gonad development, left-right patterning during embryogenesis and differentiation of the adrenal cortex. The sequence is that of Cbp/p300-interacting transactivator 2 (cited2) from Xenopus laevis (African clawed frog).